The primary structure comprises 641 residues: Putative phagocytic receptor 1a (641 aa).

Positions 1–23 are cleaved as a signal peptide; that stretch reads MKINKKQIVFFILFSIFLNHVNG. At 24-279 the chain is on the extracellular side; that stretch reads IFYLPGMIPH…ESNDNSVHWF (256 aa). Residues 280-300 traverse the membrane as a helical segment; it reads SILNSLMIVFILTVMVAMIII. At 301–349 the chain is on the cytoplasmic side; it reads RTLKKDIRRYTSIDTSEDRDSQEETGWKMIHGDVFRPPSHPMLLSVCIG. The helical transmembrane segment at 350–370 threads the bilayer; sequence SGVQIFSMTLITMIFAVLGFL. Residues 371-374 lie on the Extracellular side of the membrane; that stretch reads SPAN. Residues 375–395 traverse the membrane as a helical segment; the sequence is IGGLATALIVLFVLSAMFAGY. The Cytoplasmic portion of the chain corresponds to 396-413; that stretch reads FSTRVFTIFKGRNWKKNT. Residues 414–434 traverse the membrane as a helical segment; the sequence is IYTALSMPGIIFGIFFFVNMF. Residues 435–445 are Extracellular-facing; the sequence is LRGAKSSAAVP. A helical membrane pass occupies residues 446–466; the sequence is FGTFASIIAMWFGISVPLVFL. Over 467–502 the chain is Cytoplasmic; it reads GSYFASKKPVPEDPVRTNQIPRQVPDQIWYMNPYLS. Residues 503–523 traverse the membrane as a helical segment; the sequence is ILMGGILPFGAVFIELHFILT. Residues 524–532 are Extracellular-facing; the sequence is SLWDNQFYY. The helical transmembrane segment at 533–553 threads the bilayer; sequence IFGFLFIVLMILIVTSAEISI. Residues 554-578 lie on the Cytoplasmic side of the membrane; the sequence is VMCYFQLCAEDHHWWWRSFLTAGSS. A helical membrane pass occupies residues 579–599; sequence SLYMFIYSVSFFRYLGITKFI. The Extracellular portion of the chain corresponds to 600–608; sequence SSLLDFSYS. A helical transmembrane segment spans residues 609–629; it reads FIMSLAFAALTGTIGFYSCYF. Residues 630 to 641 are Cytoplasmic-facing; the sequence is LVRKIYSSIHIN.

It belongs to the nonaspanin (TM9SF) (TC 9.A.2) family.

The protein localises to the membrane. In terms of biological role, involved in adhesion, phagocytosis of hydrophilic particles and intracellular killing of bacteria. Associates with proteins harboring glycine-rich transmembrane domains and ensures their efficient localization to the cell surface. The sequence is that of Putative phagocytic receptor 1a (phg1a) from Dictyostelium discoideum (Social amoeba).